The following is a 271-amino-acid chain: Hachiman protein HamA (271 aa).

In terms of biological role, component of antiviral defense system Hachiman, composed of HamA and HamB. Expression of Hachiman in B.subtilis (strain BEST7003) confers resistance to phages phi105, phi29, phi3T, rho14, SBSphiJ, SpBeta and SPR. In Bacillus cereus, this protein is Hachiman protein HamA.